Here is a 255-residue protein sequence, read N- to C-terminus: uncharacterized protein (255 aa).

The disordered stretch occupies residues 42–67 (ACSGSPPEPGKGRPDTTPEQEVPVTA).

This is an uncharacterized protein from Mycobacterium tuberculosis (strain CDC 1551 / Oshkosh).